We begin with the raw amino-acid sequence, 344 residues long: Nicotinate-nucleotide--dimethylbenzimidazole phosphoribosyltransferase (344 aa).

The active-site Proton acceptor is the glutamate 305.

It belongs to the CobT family.

The catalysed reaction is 5,6-dimethylbenzimidazole + nicotinate beta-D-ribonucleotide = alpha-ribazole 5'-phosphate + nicotinate + H(+). The protein operates within nucleoside biosynthesis; alpha-ribazole biosynthesis; alpha-ribazole from 5,6-dimethylbenzimidazole: step 1/2. Its function is as follows. Catalyzes the synthesis of alpha-ribazole-5'-phosphate from nicotinate mononucleotide (NAMN) and 5,6-dimethylbenzimidazole (DMB). The polypeptide is Nicotinate-nucleotide--dimethylbenzimidazole phosphoribosyltransferase (Agrobacterium fabrum (strain C58 / ATCC 33970) (Agrobacterium tumefaciens (strain C58))).